The following is a 258-amino-acid chain: UPF0246 protein Asuc_0575 (258 aa).

The protein belongs to the UPF0246 family.

In Actinobacillus succinogenes (strain ATCC 55618 / DSM 22257 / CCUG 43843 / 130Z), this protein is UPF0246 protein Asuc_0575.